Reading from the N-terminus, the 160-residue chain is Anaerobic nitrite reductase MHB1 (160 aa).

The region spanning 8–157 (GFTEEQEALV…LVNAIKSEMK (150 aa)) is the Globin domain. The Homodimerization motif lies at 41 to 45 (EIAPS). Heme b contacts are provided by serine 51, lysine 65, histidine 69, lysine 99, and histidine 104. The Homodimerization motif lies at 111–123 (DEHFEVTKFALLE).

This sequence belongs to the plant globin family. Homodimer. Heme b is required as a cofactor. In terms of tissue distribution, root specific.

Its subcellular location is the nucleus matrix. The protein resides in the cytoplasm. It carries out the reaction Fe(III)-heme b-[protein] + nitric oxide + H2O = Fe(II)-heme b-[protein] + nitrite + 2 H(+). Functionally, phytoglobin that reduces nitrite to nitric oxide (NO) under anoxic conditions (e.g. during flooding or in waterlogged soil) and upon root nodulation. Required for general plant development and during nodulation, especially for the onset of symbiosis. Monitors nitric oxide (NO) levels during early phase of the nitrogen-fixing symbiosis and buffers oxygen in functioning nodules. May not function as an oxygen storage or transport protein. Has an unusually high affinity for O(2) through a hexacoordinate heme iron because of a very low dissociation constant. In Medicago sativa (Alfalfa), this protein is Anaerobic nitrite reductase MHB1.